Reading from the N-terminus, the 146-residue chain is Catabolic 3-dehydroquinase (146 aa).

Tyr-24 acts as the Proton acceptor in catalysis. Asn-78, His-84, and Asp-91 together coordinate substrate. Catalysis depends on His-104, which acts as the Proton donor. Residues 105–106 (IT) and Arg-115 contribute to the substrate site.

This sequence belongs to the type-II 3-dehydroquinase family. Homododecamer. Adopts a ring-like structure, composed of an arrangement of two hexameric rings stacked on top of one another.

It catalyses the reaction 3-dehydroquinate = 3-dehydroshikimate + H2O. It functions in the pathway aromatic compound metabolism; 3,4-dihydroxybenzoate biosynthesis; 3,4-dihydroxybenzoate from 3-dehydroquinate: step 1/2. Its function is as follows. Is involved in the catabolism of quinate. Allows the utilization of quinate as carbon source via the beta-ketoadipate pathway. In Candida albicans (strain SC5314 / ATCC MYA-2876) (Yeast), this protein is Catabolic 3-dehydroquinase.